A 75-amino-acid chain; its full sequence is Sec-independent protein translocase protein TatA (75 aa).

Residues 1–21 (MFGLSPAQLIILLVVILLIFG) traverse the membrane as a helical segment.

It belongs to the TatA/E family. The Tat system comprises two distinct complexes: a TatABC complex, containing multiple copies of TatA, TatB and TatC subunits, and a separate TatA complex, containing only TatA subunits. Substrates initially bind to the TatABC complex, which probably triggers association of the separate TatA complex to form the active translocon.

The protein resides in the cell inner membrane. Functionally, part of the twin-arginine translocation (Tat) system that transports large folded proteins containing a characteristic twin-arginine motif in their signal peptide across membranes. TatA could form the protein-conducting channel of the Tat system. This Haemophilus influenzae (strain PittEE) protein is Sec-independent protein translocase protein TatA.